Reading from the N-terminus, the 602-residue chain is T-box transcription factor TBX15 (602 aa).

The tract at residues 43–95 is disordered; sequence SMEALSPAGPLGDTDDPATHGLEPHPDSEQSTGSDSEVLTERTSCSFSTHTDL. Polar residues predominate over residues 71 to 94; that stretch reads EQSTGSDSEVLTERTSCSFSTHTD. A DNA-binding region (T-box) is located at residues 122–304; it reads LWKRFHDIGT…RNPFAKGFRD (183 aa). Residue Thr-330 is modified to Phosphothreonine. 2 disordered regions span residues 338–369 and 425–444; these read QKQQGGSTGTSPTTSSTGTPSPSASSHLLSPS and QSGTASATQPSETFMPQRTP. Over residues 346–369 the composition is skewed to low complexity; that stretch reads GTSPTTSSTGTPSPSASSHLLSPS.

In terms of assembly, can form a heterodimer with TBX18.

It is found in the nucleus. In terms of biological role, probable transcriptional regulator involved in the development of the skeleton of the limb, vertebral column and head. Acts by controlling the number of mesenchymal precursor cells and chondrocytes. The polypeptide is T-box transcription factor TBX15 (Tbx15) (Mus musculus (Mouse)).